Here is a 734-residue protein sequence, read N- to C-terminus: Methionine--tRNA ligase (734 aa).

Residues 12–22 (PYVNNIPHLGN) carry the 'HIGH' region motif. Positions 143, 146, 155, and 158 each coordinate Zn(2+). The 'KMSKS' region signature appears at 330–334 (KFSKS). ATP is bound at residue Lys-333. The tRNA-binding domain occupies 570-675 (FREKVLLRVV…QNPIAGERII (106 aa)).

Belongs to the class-I aminoacyl-tRNA synthetase family. MetG type 1 subfamily. Homodimer. Zn(2+) is required as a cofactor.

It localises to the cytoplasm. It catalyses the reaction tRNA(Met) + L-methionine + ATP = L-methionyl-tRNA(Met) + AMP + diphosphate. Its function is as follows. Is required not only for elongation of protein synthesis but also for the initiation of all mRNA translation through initiator tRNA(fMet) aminoacylation. This is Methionine--tRNA ligase from Borreliella burgdorferi (strain ZS7) (Borrelia burgdorferi).